The primary structure comprises 331 residues: Protoheme IX farnesyltransferase (331 aa).

The next 8 membrane-spanning stretches (helical) occupy residues 63 to 83 (LACT…LNCL), 109 to 129 (SVFI…VSGV), 132 to 152 (LAAG…TAFL), 160 to 180 (IVFG…AAAG), 188 to 208 (WLFS…AILL), 215 to 235 (VGIP…AISV), 241 to 261 (VFLS…YGIL), and 294 to 314 (ILYM…VSIV).

This sequence belongs to the UbiA prenyltransferase family. Protoheme IX farnesyltransferase subfamily.

The protein resides in the cell inner membrane. It catalyses the reaction heme b + (2E,6E)-farnesyl diphosphate + H2O = Fe(II)-heme o + diphosphate. The protein operates within porphyrin-containing compound metabolism; heme O biosynthesis; heme O from protoheme: step 1/1. In terms of biological role, converts heme B (protoheme IX) to heme O by substitution of the vinyl group on carbon 2 of heme B porphyrin ring with a hydroxyethyl farnesyl side group. The protein is Protoheme IX farnesyltransferase of Prochlorococcus marinus (strain NATL1A).